The following is a 260-amino-acid chain: Carbonic anhydrase 3 (260 aa).

A2 is subject to N-acetylalanine. One can recognise an Alpha-carbonic anhydrase domain in the interval 3-259 (KEWGYADHNG…IKGRIVKASF (257 aa)). 4 positions are modified to phosphoserine: S29, S43, S50, and S55. Residues 64-67 (KTCR) form an involved in proton transfer region. T73 is modified (phosphothreonine). The Zn(2+) site is built by H94, H96, and H119. Y127 bears the Phosphotyrosine mark. Residues C182 and C187 each carry the S-glutathionyl cysteine modification. 198-199 (TT) lines the substrate pocket. Position 216 is a phosphothreonine (T216). S219 carries the phosphoserine modification.

This sequence belongs to the alpha-carbonic anhydrase family. Zn(2+) serves as cofactor. In terms of processing, S-thiolated both by thiol-disulfide exchange with glutathione disulfide and by oxyradical-initiated S-thiolation with reduced glutathione. S-glutathionylated in hepatocytes under oxidative stress.

The protein localises to the cytoplasm. The catalysed reaction is hydrogencarbonate + H(+) = CO2 + H2O. With respect to regulation, inhibited by acetazolamide. Reversible hydration of carbon dioxide. In Bos taurus (Bovine), this protein is Carbonic anhydrase 3 (CA3).